A 256-amino-acid chain; its full sequence is 5-keto-4-deoxy-D-glucarate aldolase (256 aa).

The active-site Proton acceptor is the His-50. Gln-151 provides a ligand contact to substrate. Glu-153 contributes to the Mg(2+) binding site. Residues Ser-178 and Asp-179 each coordinate substrate. Mg(2+) is bound at residue Asp-179.

Belongs to the HpcH/HpaI aldolase family. KDGluc aldolase subfamily. As to quaternary structure, homohexamer; trimer of dimers. It depends on Mg(2+) as a cofactor.

It carries out the reaction 5-dehydro-4-deoxy-D-glucarate = 2-hydroxy-3-oxopropanoate + pyruvate. The enzyme catalyses 2-dehydro-3-deoxy-D-glucarate = 2-hydroxy-3-oxopropanoate + pyruvate. The protein operates within carbohydrate acid metabolism; galactarate degradation; D-glycerate from galactarate: step 2/3. Catalyzes the reversible retro-aldol cleavage of both 5-keto-4-deoxy-D-glucarate and 2-keto-3-deoxy-D-glucarate to pyruvate and tartronic semialdehyde. The protein is 5-keto-4-deoxy-D-glucarate aldolase of Shigella sonnei (strain Ss046).